A 59-amino-acid polypeptide reads, in one-letter code: Large ribosomal subunit protein bL32 (59 aa).

The tract at residues 1–59 is disordered; the sequence is MAVQQNKKSPSKRGMHRAHDFLTAPVIAIEPSTGEAHRRHHISPNGFYRGRKVVKGKDE. The span at 49-59 shows a compositional bias: basic residues; sequence RGRKVVKGKDE.

The protein belongs to the bacterial ribosomal protein bL32 family.

The polypeptide is Large ribosomal subunit protein bL32 (Laribacter hongkongensis (strain HLHK9)).